Here is a 192-residue protein sequence, read N- to C-terminus: MLRRGVKIGVLTNNENKFIELKEIAKNFNIELEHLRGEKIEIQSDDLEEISRTAANLAYLIFRRPLIVDDSGLFVQALQNFPGPYTNFVKNTIGLKGILKLLEGIKDRSAYFMTALTFTDGKIIKTFIGIVKGAISEEIRGNLGFGFDPIFIPEGEKRTFAEMSLEEKNRYSHRARAFAKFAEFLESYTEKE.

Residue 12 to 17 (TNNENK) coordinates substrate. Residues Glu41 and Asp70 each contribute to the Mg(2+) site. The active-site Proton acceptor is the Asp70. Residues Ser71, 145–148 (FGFD), Lys168, and 173–174 (HR) each bind substrate.

It belongs to the HAM1 NTPase family. In terms of assembly, homodimer. Mg(2+) is required as a cofactor.

It carries out the reaction XTP + H2O = XMP + diphosphate + H(+). It catalyses the reaction dITP + H2O = dIMP + diphosphate + H(+). The catalysed reaction is ITP + H2O = IMP + diphosphate + H(+). Its function is as follows. Pyrophosphatase that catalyzes the hydrolysis of nucleoside triphosphates to their monophosphate derivatives, with a high preference for the non-canonical purine nucleotides XTP (xanthosine triphosphate), dITP (deoxyinosine triphosphate) and ITP. Seems to function as a house-cleaning enzyme that removes non-canonical purine nucleotides from the nucleotide pool, thus preventing their incorporation into DNA/RNA and avoiding chromosomal lesions. In Saccharolobus solfataricus (strain ATCC 35092 / DSM 1617 / JCM 11322 / P2) (Sulfolobus solfataricus), this protein is dITP/XTP pyrophosphatase.